The sequence spans 450 residues: Tubulin beta-3 chain (450 aa).

GTP is bound by residues Q11, E69, S138, G142, T143, G144, N204, and N226. Residue E69 coordinates Mg(2+). The segment at S420–Y450 is disordered. Acidic residues predominate over residues T429 to Y450.

The protein belongs to the tubulin family. Dimer of alpha and beta chains. A typical microtubule is a hollow water-filled tube with an outer diameter of 25 nm and an inner diameter of 15 nM. Alpha-beta heterodimers associate head-to-tail to form protofilaments running lengthwise along the microtubule wall with the beta-tubulin subunit facing the microtubule plus end conferring a structural polarity. Microtubules usually have 13 protofilaments but different protofilament numbers can be found in some organisms and specialized cells. It depends on Mg(2+) as a cofactor.

Its subcellular location is the cytoplasm. The protein resides in the cytoskeleton. Its function is as follows. Tubulin is the major constituent of microtubules, a cylinder consisting of laterally associated linear protofilaments composed of alpha- and beta-tubulin heterodimers. Microtubules grow by the addition of GTP-tubulin dimers to the microtubule end, where a stabilizing cap forms. Below the cap, tubulin dimers are in GDP-bound state, owing to GTPase activity of alpha-tubulin. In Arabidopsis thaliana (Mouse-ear cress), this protein is Tubulin beta-3 chain (TUBB3).